The chain runs to 364 residues: Probable dual-specificity RNA methyltransferase RlmN (364 aa).

The Proton acceptor role is filled by glutamate 106. The 239-residue stretch at tyrosine 112–arginine 350 folds into the Radical SAM core domain. Cysteine 119 and cysteine 356 are disulfide-bonded. Residues cysteine 126, cysteine 130, and cysteine 133 each contribute to the [4Fe-4S] cluster site. S-adenosyl-L-methionine-binding positions include glycine 177–glutamate 178, serine 211, serine 234–histidine 236, and asparagine 313. Catalysis depends on cysteine 356, which acts as the S-methylcysteine intermediate.

The protein belongs to the radical SAM superfamily. RlmN family. Requires [4Fe-4S] cluster as cofactor.

It localises to the cytoplasm. It carries out the reaction adenosine(2503) in 23S rRNA + 2 reduced [2Fe-2S]-[ferredoxin] + 2 S-adenosyl-L-methionine = 2-methyladenosine(2503) in 23S rRNA + 5'-deoxyadenosine + L-methionine + 2 oxidized [2Fe-2S]-[ferredoxin] + S-adenosyl-L-homocysteine. It catalyses the reaction adenosine(37) in tRNA + 2 reduced [2Fe-2S]-[ferredoxin] + 2 S-adenosyl-L-methionine = 2-methyladenosine(37) in tRNA + 5'-deoxyadenosine + L-methionine + 2 oxidized [2Fe-2S]-[ferredoxin] + S-adenosyl-L-homocysteine. Functionally, specifically methylates position 2 of adenine 2503 in 23S rRNA and position 2 of adenine 37 in tRNAs. In Mycobacterium bovis (strain ATCC BAA-935 / AF2122/97), this protein is Probable dual-specificity RNA methyltransferase RlmN.